The primary structure comprises 270 residues: Putative pyruvate, phosphate dikinase regulatory protein (270 aa).

148-155 (GISRTSKT) is a binding site for ADP.

It belongs to the pyruvate, phosphate/water dikinase regulatory protein family. PDRP subfamily.

It carries out the reaction N(tele)-phospho-L-histidyl/L-threonyl-[pyruvate, phosphate dikinase] + ADP = N(tele)-phospho-L-histidyl/O-phospho-L-threonyl-[pyruvate, phosphate dikinase] + AMP + H(+). It catalyses the reaction N(tele)-phospho-L-histidyl/O-phospho-L-threonyl-[pyruvate, phosphate dikinase] + phosphate + H(+) = N(tele)-phospho-L-histidyl/L-threonyl-[pyruvate, phosphate dikinase] + diphosphate. Functionally, bifunctional serine/threonine kinase and phosphorylase involved in the regulation of the pyruvate, phosphate dikinase (PPDK) by catalyzing its phosphorylation/dephosphorylation. The sequence is that of Putative pyruvate, phosphate dikinase regulatory protein from Bacillus mycoides (strain KBAB4) (Bacillus weihenstephanensis).